Consider the following 521-residue polypeptide: Cytochrome P450 1A1 (521 aa).

Phe229 contacts substrate. A heme-binding site is contributed by Cys463.

It belongs to the cytochrome P450 family. The cofactor is heme.

The protein resides in the endoplasmic reticulum membrane. It is found in the microsome membrane. The catalysed reaction is an organic molecule + reduced [NADPH--hemoprotein reductase] + O2 = an alcohol + oxidized [NADPH--hemoprotein reductase] + H2O + H(+). Functionally, cytochromes P450 are a group of heme-thiolate monooxygenases. They oxidize a variety of structurally unrelated compounds, including steroids, fatty acids, and xenobiotics. This is Cytochrome P450 1A1 (cyp1a1) from Sparus aurata (Gilthead sea bream).